A 513-amino-acid chain; its full sequence is Activin receptor type-2A (513 aa).

Positions 1-19 (MGAAAKLAFAVFLISCSSG) are cleaved as a signal peptide. Over 20–135 (AILGRSETQE…TSNPVTPKPP (116 aa)) the chain is Extracellular. 5 disulfide bridges follow: cysteine 30-cysteine 60, cysteine 50-cysteine 78, cysteine 85-cysteine 104, cysteine 91-cysteine 103, and cysteine 105-cysteine 110. Residues asparagine 43 and asparagine 66 are each glycosylated (N-linked (GlcNAc...) asparagine). The chain crosses the membrane as a helical span at residues 136–161 (YYNILLYSLVPLMLIAGIVICAFWVY). Residues 162 to 513 (RHHKMAYPPV…VDFPPKESSL (352 aa)) are Cytoplasmic-facing. The region spanning 192 to 485 (LQLLEVKARG…GERITQMQRL (294 aa)) is the Protein kinase domain. ATP contacts are provided by residues 198-206 (KARGRFGCV) and lysine 219. Catalysis depends on aspartate 322, which acts as the Proton acceptor.

Belongs to the protein kinase superfamily. TKL Ser/Thr protein kinase family. TGFB receptor subfamily. As to quaternary structure, part of a complex consisting of MAGI2/ARIP1, ACVR2A, ACVR1B and SMAD3. Interacts with MAGI2/ARIP1. Interacts with type I receptor ACVR1. Interacts with BMP7. Interacts with TSC22D1/TSC-22. Interacts with activin A/INHBA. Mg(2+) serves as cofactor. It depends on Mn(2+) as a cofactor. In terms of tissue distribution, brain, testis, intestine, liver and kidney.

It is found in the cell membrane. The catalysed reaction is L-threonyl-[receptor-protein] + ATP = O-phospho-L-threonyl-[receptor-protein] + ADP + H(+). It catalyses the reaction L-seryl-[receptor-protein] + ATP = O-phospho-L-seryl-[receptor-protein] + ADP + H(+). Its function is as follows. On ligand binding, forms a receptor complex consisting of two type II and two type I transmembrane serine/threonine kinases. Type II receptors phosphorylate and activate type I receptors which autophosphorylate, then bind and activate SMAD transcriptional regulators. Receptor for activin A, activin B and inhibin A. Mediates induction of adipogenesis by GDF6. The protein is Activin receptor type-2A of Mus musculus (Mouse).